A 307-amino-acid chain; its full sequence is NAD kinase 1 (307 aa).

The active-site Proton acceptor is Asp-67. NAD(+) contacts are provided by residues 67-68 (DG), 149-150 (NE), Arg-160, Asp-181, and 192-197 (TCYTSS).

The protein belongs to the NAD kinase family. It depends on a divalent metal cation as a cofactor.

It localises to the cytoplasm. The enzyme catalyses NAD(+) + ATP = ADP + NADP(+) + H(+). Its function is as follows. Involved in the regulation of the intracellular balance of NAD and NADP, and is a key enzyme in the biosynthesis of NADP. Catalyzes specifically the phosphorylation on 2'-hydroxyl of the adenosine moiety of NAD to yield NADP. Essential for photoheterotrophic growth. Has a significant function in the oxidative pentose phosphate (OPP) pathway for glucose catabolism under photoheterotrophic conditions. Is also involved in cellular redox homeostasis. In Synechocystis sp. (strain ATCC 27184 / PCC 6803 / Kazusa), this protein is NAD kinase 1.